Consider the following 490-residue polypeptide: GTPase Der (490 aa).

2 consecutive EngA-type G domains span residues 3 to 166 (PVVA…MDDV) and 203 to 376 (IKLA…DSST). Residues 9-16 (GRPNVGKS), 56-60 (DTGGI), 118-121 (NKTD), 209-216 (GRPNVGKS), 256-260 (DTAGV), and 321-324 (NKWD) each bind GTP. Residues 377–461 (RRVSTAMLTR…PIRIQFKEGE (85 aa)) enclose the KH-like domain.

Belongs to the TRAFAC class TrmE-Era-EngA-EngB-Septin-like GTPase superfamily. EngA (Der) GTPase family. As to quaternary structure, associates with the 50S ribosomal subunit.

GTPase that plays an essential role in the late steps of ribosome biogenesis. The chain is GTPase Der from Salmonella choleraesuis (strain SC-B67).